Consider the following 483-residue polypeptide: tRNA sulfurtransferase (483 aa).

In terms of domain architecture, THUMP spans 62–166 (PEICDALTRI…QDKLILVKAR (105 aa)). ATP is bound by residues 184-185 (LI), Lys-266, Gly-288, and Gln-297. Residues Cys-345 and Cys-457 are joined by a disulfide bond. The 79-residue stretch at 405–483 (LADTDVLLDI…GYTNVKVYRP (79 aa)) folds into the Rhodanese domain. Residue Cys-457 is the Cysteine persulfide intermediate of the active site.

The protein belongs to the ThiI family.

It is found in the cytoplasm. The enzyme catalyses [ThiI sulfur-carrier protein]-S-sulfanyl-L-cysteine + a uridine in tRNA + 2 reduced [2Fe-2S]-[ferredoxin] + ATP + H(+) = [ThiI sulfur-carrier protein]-L-cysteine + a 4-thiouridine in tRNA + 2 oxidized [2Fe-2S]-[ferredoxin] + AMP + diphosphate. It carries out the reaction [ThiS sulfur-carrier protein]-C-terminal Gly-Gly-AMP + S-sulfanyl-L-cysteinyl-[cysteine desulfurase] + AH2 = [ThiS sulfur-carrier protein]-C-terminal-Gly-aminoethanethioate + L-cysteinyl-[cysteine desulfurase] + A + AMP + 2 H(+). Its pathway is cofactor biosynthesis; thiamine diphosphate biosynthesis. Functionally, catalyzes the ATP-dependent transfer of a sulfur to tRNA to produce 4-thiouridine in position 8 of tRNAs, which functions as a near-UV photosensor. Also catalyzes the transfer of sulfur to the sulfur carrier protein ThiS, forming ThiS-thiocarboxylate. This is a step in the synthesis of thiazole, in the thiamine biosynthesis pathway. The sulfur is donated as persulfide by IscS. The chain is tRNA sulfurtransferase from Yersinia pseudotuberculosis serotype IB (strain PB1/+).